We begin with the raw amino-acid sequence, 698 residues long: Interleukin enhancer-binding factor 3 (698 aa).

Residues 5-379 form the DZF domain; sequence RIFLNDDRHV…ALKRPMEEDG (375 aa). Disordered regions lie at residues 51 to 88, 374 to 403, and 473 to 522; these read QQEK…PTRT, PMEE…PPQA, and EEKE…KHGK. The span at 61–71 shows a compositional bias: acidic residues; it reads EQPEPEEPETT. Composition is skewed to basic and acidic residues over residues 72–81 and 374–384; these read EEGKDSEGKT and PMEEDGEDKSP. The short motif at 372–390 is the Bipartite nuclear localization signal element; that stretch reads KRPMEEDGEDKSPSKKKKK. The DRBM 1 domain occupies 399–468; it reads EPPQAMNALM…AVKVLQDMGL (70 aa). Residues 490 to 503 show a composition bias toward polar residues; the sequence is TPAQPADSTQTDSA. The DRBM 2 domain occupies 520–586; it reads HGKNPVMELN…ALAALEKLFP (67 aa).

In terms of assembly, a component of a ybx2/frgy2-containing mRNA-ribonucleoprotein (mRNP) complex. Also a component of the CCAAT box transcription factor (CBTF) complex. In terms of processing, phosphorylated. Phosphorylation affects nuclear translocation. Methylated by protein arginine N-methyltransferase 1 (prmt1b) in the RGG-rich domain. Methylation decreases DNA-binding and thereby decreases transcription of the gata2 gene, but does not regulate dsRNA binding or subcellular localization.

The protein localises to the nucleus. It localises to the cytoplasm. Its function is as follows. RNA-binding protein that plays an essential role in the biogenesis of circular RNAs (circRNAs) which are produced by back-splicing circularization of pre-mRNAs. Within the nucleus, promotes circRNAs processing by stabilizing the regulatory elements residing in the flanking introns of the circularized exons. Plays thereby a role in the back-splicing of a subset of circRNAs. As a consequence, participates in a wide range of transcriptional and post-transcriptional processes. Binds to poly-U elements and AU-rich elements (AREs) in the 3'-UTR of target mRNAs. Upon viral infection, ILF3 accumulates in the cytoplasm and participates in the innate antiviral response. Mechanistically, ILF3 becomes phosphorylated and activated by the double-stranded RNA-activated protein kinase/PKR which releases ILF3 from cellular mature circRNAs. In turn, unbound ILF3 molecules are able to interact with and thus inhibit viral mRNAs. Has a cytoplasmic role early in development as part of a ribonucleoprotein (mRNP) complex which may regulate mRNA transport and/or translation. Following nuclear localization at the mid-blastula transition, acts as a transcription factor and binds the 5'-CCAAT-3' promoter sequence to regulate transcription of the gata2 gene as a subunit of the CCAAT box transcription factor (CBTF). Its role as an mRNP component negatively regulates its activity as a transcription factor by precluding its nuclear localization. The sequence is that of Interleukin enhancer-binding factor 3 from Xenopus tropicalis (Western clawed frog).